Consider the following 1042-residue polypeptide: Glutamate dehydrogenase 2 (1042 aa).

Residue K596 is part of the active site. R763 is subject to ADP-ribosylarginine; by Legionella Lart1.

This sequence belongs to the Glu/Leu/Phe/Val dehydrogenases family. In terms of assembly, homodimer. Post-translationally, (Microbial infection) ADP-ribosylated at Arg-763 by the Legionella pneumophila effector Lart1, which inhibits the glutamate dehydrogenase activity. Amoeba are natural hosts of Legionella, and ADP-ribosylation by Lart1 may promote Legionella parasitism.

It localises to the cytoplasm. It carries out the reaction L-glutamate + NAD(+) + H2O = 2-oxoglutarate + NH4(+) + NADH + H(+). With respect to regulation, activity is stimulated by AMP. (Microbial infection) Inhibited by ADP-ribosylation. In Dictyostelium discoideum (Social amoeba), this protein is Glutamate dehydrogenase 2 (glud2).